The chain runs to 224 residues: Cytochrome c biogenesis ATP-binding export protein CcmA (224 aa).

In terms of domain architecture, ABC transporter spans 1 to 220 (MQNAEAAPAL…EYAHAEVVGA (220 aa)). Residue 40 to 47 (GANGSGKT) coordinates ATP.

Belongs to the ABC transporter superfamily. CcmA exporter (TC 3.A.1.107) family. In terms of assembly, the complex is composed of two ATP-binding proteins (CcmA) and two transmembrane proteins (CcmB).

Its subcellular location is the cell inner membrane. The catalysed reaction is heme b(in) + ATP + H2O = heme b(out) + ADP + phosphate + H(+). Its function is as follows. Part of the ABC transporter complex CcmAB involved in the biogenesis of c-type cytochromes; once thought to export heme, this seems not to be the case, but its exact role is uncertain. Responsible for energy coupling to the transport system. This Bordetella bronchiseptica (strain ATCC BAA-588 / NCTC 13252 / RB50) (Alcaligenes bronchisepticus) protein is Cytochrome c biogenesis ATP-binding export protein CcmA.